The sequence spans 292 residues: Ribosomal RNA small subunit methyltransferase I (292 aa).

This sequence belongs to the methyltransferase superfamily. RsmI family.

The protein localises to the cytoplasm. It carries out the reaction cytidine(1402) in 16S rRNA + S-adenosyl-L-methionine = 2'-O-methylcytidine(1402) in 16S rRNA + S-adenosyl-L-homocysteine + H(+). Catalyzes the 2'-O-methylation of the ribose of cytidine 1402 (C1402) in 16S rRNA. The sequence is that of Ribosomal RNA small subunit methyltransferase I from Bacillus subtilis (strain 168).